The primary structure comprises 41 residues: Large ribosomal subunit protein bL36 (41 aa).

The protein belongs to the bacterial ribosomal protein bL36 family.

This Xanthomonas axonopodis pv. citri (strain 306) protein is Large ribosomal subunit protein bL36.